The following is a 516-amino-acid chain: Polyprenol-phosphate-mannose--protein mannosyltransferase (516 aa).

Residues 1–11 are compositionally biased toward polar residues; it reads MTALDTDTPTA. The segment at 1 to 23 is disordered; sequence MTALDTDTPTAGRSAPLISPGPV. Transmembrane regions (helical) follow at residues 113-133, 143-163, 166-186, 234-254, 275-295, 384-404, 413-433, 437-457, and 473-493; these read YNGL…VMLV, STLV…SFVS, TALL…CLMV, WSGL…DAIA, AAYV…APWF, VMLV…GWAL, WRYG…FADI, MYFF…ALIL, and LGLL…AWMY.

The protein belongs to the glycosyltransferase 39 family.

The protein resides in the cell membrane. Its pathway is protein modification; protein glycosylation. Protein O-mannosyltransferase that catalyzes the transfer of a single mannose residue from a polyprenol phospho-mannosyl lipidic donor to the hydroxyl group of selected serine and threonine residues in acceptor proteins. Involved in DNA conjugation, in at least the recipient strain. The chain is Polyprenol-phosphate-mannose--protein mannosyltransferase (pmt) from Mycolicibacterium smegmatis (strain MKD8) (Mycobacterium smegmatis).